The primary structure comprises 4065 residues: Polyketide synthase-nonribosomal peptide synthetase pyiS (4065 aa).

Positions 6–440 (SEPVAIIGTG…GANCHAILEA (435 aa)) constitute a Ketosynthase family 3 (KS3) domain. Residues C179, H314, and H360 each act as for beta-ketoacyl synthase activity in the active site. An acyl transferase region spans residues 552-875 (IFTGQGAQWP…PYTGVLSRGK (324 aa)). The interval 950–1087 (NELLGRQILD…CDVLVTYGDS (138 aa)) is N-terminal hotdog fold. Residues 950–1260 (NELLGRQILD…TQPLFNPTEA (311 aa)) form the PKS/mFAS DH domain. A dehydratase (DH) domain region spans residues 951-1254 (ELLGRQILDG…QVEGLQTQPL (304 aa)). H982 functions as the Proton acceptor; for dehydratase activity in the catalytic mechanism. The tract at residues 1102-1260 (EYFMLGVESD…TQPLFNPTEA (159 aa)) is C-terminal hotdog fold. D1166 (proton donor; for dehydratase activity) is an active-site residue. The methyltransferase (MT) domain stretch occupies residues 1409-1593 (AHGMPRYTKY…KQTGFSGIDT (185 aa)). The tract at residues 2129–2302 (TYWLVGLSGT…NASVVHIGAI (174 aa)) is ketoreductase (KR)domain. One can recognise a Carrier 1 domain in the interval 2411 to 2492 (INSAEVYEII…EILETAQQLL (82 aa)). An O-(pantetheine 4'-phosphoryl)serine modification is found at S2452. The disordered stretch occupies residues 2497–2561 (LPKMDPNDKS…GAKKGETVSK (65 aa)). Positions 2551-2561 (SGAKKGETVSK) are enriched in basic and acidic residues. Positions 2645–3076 (SKKTPISFAQ…FSRNQALRLA (432 aa)) are condensation. An adenylation region spans residues 3112 to 3516 (DIAKQKSHSL…RLLLEGRIAD (405 aa)). A Carrier 2 domain is found at 3634-3714 (QDLNDTESRL…DMAALVDELS (81 aa)). S3674 bears the O-(pantetheine 4'-phosphoryl)serine mark. The segment at 3760 to 3975 (LTGSTGFLGR…LDFISVDEAA (216 aa)) is reductase-like.

It belongs to the NRP synthetase family.

It participates in mycotoxin biosynthesis. In terms of biological role, hybrid PKS-NRPS synthetase; part of the gene cluster that mediates the biosynthesis of the mycotoxin pyrichalasin H, a tyrosine-derived cytochalasan that inhibits the growth of rice seedlings, but also inhibits lymphocyte capping and actin polymerization and alters cell morphology. Pyrichalasin H is indicated as the responsible agent for the genus-specific pathogenicity of M.grisea toward crabgrass. The first step in the pathway is catalyzed by the O-methyltransferase pyiA which methylates free tyrosine to generate the precursor O-methyltyrosine. The hybrid PKS-NRPS pyiS, assisted by the enoyl reductase pyiC, are responsible for fusion of the O-methyltyrosine precursor and the polyketide backbone. The polyketide synthase module (PKS) of pyiS is responsible for the synthesis of the polyketide backbone and the downstream nonribosomal peptide synthetase (NRPS) amidates the carboxyl end of the polyketide with the O-methyltyrosine precursor. As the NRPS A-domain demonstrates substrate tolerance, pyiS can also use phenylalanine, tyrosine and even para-chlorophenylalanine as amino acid precursor, which leads to the production of novel cytochalasans, including halogenated cytochalasans. Because pyiS lacks a designated enoylreductase (ER) domain, the required activity is provided the enoyl reductase pyiC. Reduction by the hydrolyase pyiE leads to 1,5-dihydropyrrolone, which is substrate for dehydration and intra-molecular Diels-Alder cyclization by the Diels-Alderase pyiF to yield the required isoindolone-fused macrocycle. The tailoring cytochrome P450 monooxygenases piyD and piyG catalyze the hydroxylation at C-18 and C-7, respectivily, whereas the short-chain dehydrogenase/reductase pyiH reduces the carbonyl at C-21 in preparation for the transfer of an acetyl group by the acetyltransferase pyiB. These 3 reactions whose order is not clear yet, lead to the production of O-methylpyrichalasin J, a deacetylated pyrichalasin H. Finally, pyiB to converts O-methylpyrichalasin J into the final product pyrichalasin H via acetylation of C-21. This is Polyketide synthase-nonribosomal peptide synthetase pyiS from Pyricularia grisea (Crabgrass-specific blast fungus).